Reading from the N-terminus, the 360-residue chain is Phospho-N-acetylmuramoyl-pentapeptide-transferase (360 aa).

The next 10 helical transmembrane spans lie at 26-46 (AIVS…RMIA), 72-92 (PTMG…LWAY), 94-114 (SNPY…IGFV), 132-152 (WKYF…YLAG), 168-188 (VMPQ…VGTG), 199-219 (GLAI…AWAT), 236-256 (AGEL…FLWF), 263-283 (VFMG…IAVL), 288-308 (FLLV…ILQV), and 338-358 (VIVR…ATLK).

Belongs to the glycosyltransferase 4 family. MraY subfamily. Mg(2+) is required as a cofactor.

The protein localises to the cell inner membrane. It catalyses the reaction UDP-N-acetyl-alpha-D-muramoyl-L-alanyl-gamma-D-glutamyl-meso-2,6-diaminopimeloyl-D-alanyl-D-alanine + di-trans,octa-cis-undecaprenyl phosphate = di-trans,octa-cis-undecaprenyl diphospho-N-acetyl-alpha-D-muramoyl-L-alanyl-D-glutamyl-meso-2,6-diaminopimeloyl-D-alanyl-D-alanine + UMP. The protein operates within cell wall biogenesis; peptidoglycan biosynthesis. In terms of biological role, catalyzes the initial step of the lipid cycle reactions in the biosynthesis of the cell wall peptidoglycan: transfers peptidoglycan precursor phospho-MurNAc-pentapeptide from UDP-MurNAc-pentapeptide onto the lipid carrier undecaprenyl phosphate, yielding undecaprenyl-pyrophosphoryl-MurNAc-pentapeptide, known as lipid I. In Klebsiella pneumoniae subsp. pneumoniae (strain ATCC 700721 / MGH 78578), this protein is Phospho-N-acetylmuramoyl-pentapeptide-transferase.